A 172-amino-acid chain; its full sequence is Calcium channel flower homolog (172 aa).

Residues 1–32 lie on the Cytoplasmic side of the membrane; the sequence is MSSSGGAPGASASSAPPAQEEGMTWWYRWLCR. Residues 33–53 form a helical membrane-spanning segment; sequence LSGVLGAVSCAISGLFNCITI. Residues 54 to 57 are Extracellular-facing; it reads HPLN. A helical membrane pass occupies residues 58–78; that stretch reads IAAGVWMIMNAFILLLCEAPF. Over 79 to 102 the chain is Cytoplasmic; it reads CCQFIEFANTVAEKVDRLRSWQKA. A helical membrane pass occupies residues 103-123; the sequence is VFYCGMAVVPIVISLTLTTLL. Topologically, residues 124-125 are extracellular; sequence GN. A helical transmembrane segment spans residues 126 to 142; that stretch reads AIAFATGVLYGLSALGK. Residues 143 to 172 lie on the Cytoplasmic side of the membrane; the sequence is KGDAISYARIQQQRQQADEEKLAETLEGEL.

This sequence belongs to the calcium channel flower family. As to quaternary structure, interacts with adaptor protein complex 2 (AP-2). Detected in skin cells at low levels of expression (at protein level).

Its subcellular location is the cell membrane. The protein localises to the cytoplasmic vesicle. The protein resides in the secretory vesicle. It is found in the synaptic vesicle. It localises to the golgi apparatus. Its subcellular location is the vesicle. The protein localises to the early endosome. The protein resides in the recycling endosome. It is found in the endoplasmic reticulum membrane. Transmembrane protein which mediates synaptic endocytosis and fitness-based cell culling. In response to different stimulus strengths, controls two major modes of synaptic vesicle (SV) retrieval in hippocampal neurons; Clathrin-mediated endocytosis (CME) in response to mild stimulation and activity-dependent bulk endocytosis (ADBE) in response to strong stimulation. In cytotoxic T-lymphoocytes (CTLs) facilitates calcium-dependent endocytosis of cytotoxic granules at the immuno synapse. Different isoforms work as fitness fingerprints in 'loser' and 'winner' cells and thereby mediate win/lose decisions as part of the cell competition process. Its function is as follows. Functions with the other flower isoforms to produce tissue-specific fitness fingerprints that identify unfit or fit cells during cell selection processes in order to maintain tissue health. During cell competition, if levels of this isoform in cells is higher than in the surrounding neighboring cells, the cells are recognized as 'winner' cells, and do not undergo elimination via apoptosis. Functionally, functions with the other flower isoforms to produce tissue-specific fitness fingerprints that identify unfit or fit cells during cell selection processes in order to maintain tissue health. During cell competition, if levels of this isoform in unfit cells is higher than in the surrounding neighboring cells, the cells are recognized as 'loser' cells, and undergo elimination via apoptosis to be replaced by the surrounding healthy 'winner' cell population. This is Calcium channel flower homolog (CACFD1) from Homo sapiens (Human).